Consider the following 386-residue polypeptide: Diaminopimelate decarboxylase (386 aa).

Position 49 is an N6-(pyridoxal phosphate)lysine (Lys49). Pyridoxal 5'-phosphate-binding positions include Gly228 and 266–269 (ELGR). 5 residues coordinate substrate: Arg269, Arg305, Tyr309, Glu335, and Tyr363. Pyridoxal 5'-phosphate is bound at residue Tyr363.

The protein belongs to the Orn/Lys/Arg decarboxylase class-II family. LysA subfamily. As to quaternary structure, homodimer. It depends on pyridoxal 5'-phosphate as a cofactor.

It carries out the reaction meso-2,6-diaminopimelate + H(+) = L-lysine + CO2. It participates in amino-acid biosynthesis; L-lysine biosynthesis via DAP pathway; L-lysine from DL-2,6-diaminopimelate: step 1/1. Specifically catalyzes the decarboxylation of meso-diaminopimelate (meso-DAP) to L-lysine. The sequence is that of Diaminopimelate decarboxylase from Bacteroides thetaiotaomicron (strain ATCC 29148 / DSM 2079 / JCM 5827 / CCUG 10774 / NCTC 10582 / VPI-5482 / E50).